Here is a 96-residue protein sequence, read N- to C-terminus: NADH-ubiquinone oxidoreductase chain 4L (96 aa).

3 helical membrane-spanning segments follow: residues 1–21 (MPTTLIFTSFFLALLGLSLQR), 27–47 (LLLTLESMALALYVSTALWAL), and 57–77 (APLIILTFSACEAGMGLSLMI).

Belongs to the complex I subunit 4L family.

The protein resides in the mitochondrion membrane. It catalyses the reaction a ubiquinone + NADH + 5 H(+)(in) = a ubiquinol + NAD(+) + 4 H(+)(out). In terms of biological role, core subunit of the mitochondrial membrane respiratory chain NADH dehydrogenase (Complex I) which catalyzes electron transfer from NADH through the respiratory chain, using ubiquinone as an electron acceptor. Part of the enzyme membrane arm which is embedded in the lipid bilayer and involved in proton translocation. This chain is NADH-ubiquinone oxidoreductase chain 4L (MT-ND4L), found in Petromyzon marinus (Sea lamprey).